The following is a 79-amino-acid chain: Acyl carrier protein (79 aa).

The Carrier domain occupies 2–77 (STIEERVKKI…QAIDYVKSHV (76 aa)). Ser37 carries the O-(pantetheine 4'-phosphoryl)serine modification.

This sequence belongs to the acyl carrier protein (ACP) family. In terms of processing, 4'-phosphopantetheine is transferred from CoA to a specific serine of apo-ACP by AcpS. This modification is essential for activity because fatty acids are bound in thioester linkage to the sulfhydryl of the prosthetic group.

The protein resides in the cytoplasm. It functions in the pathway lipid metabolism; fatty acid biosynthesis. Functionally, carrier of the growing fatty acid chain in fatty acid biosynthesis. This chain is Acyl carrier protein, found in Xanthomonas oryzae pv. oryzae (strain MAFF 311018).